The sequence spans 383 residues: Arginine biosynthesis bifunctional protein ArgJ (383 aa).

T146, K168, T179, E259, N378, and T383 together coordinate substrate. The active-site Nucleophile is T179.

Belongs to the ArgJ family. Heterotetramer of two alpha and two beta chains.

Its subcellular location is the cytoplasm. The enzyme catalyses N(2)-acetyl-L-ornithine + L-glutamate = N-acetyl-L-glutamate + L-ornithine. The catalysed reaction is L-glutamate + acetyl-CoA = N-acetyl-L-glutamate + CoA + H(+). It participates in amino-acid biosynthesis; L-arginine biosynthesis; L-ornithine and N-acetyl-L-glutamate from L-glutamate and N(2)-acetyl-L-ornithine (cyclic): step 1/1. It functions in the pathway amino-acid biosynthesis; L-arginine biosynthesis; N(2)-acetyl-L-ornithine from L-glutamate: step 1/4. Functionally, catalyzes two activities which are involved in the cyclic version of arginine biosynthesis: the synthesis of N-acetylglutamate from glutamate and acetyl-CoA as the acetyl donor, and of ornithine by transacetylation between N(2)-acetylornithine and glutamate. This Thermobifida fusca (strain YX) protein is Arginine biosynthesis bifunctional protein ArgJ.